Reading from the N-terminus, the 342-residue chain is Phosphate acyltransferase (342 aa).

This sequence belongs to the PlsX family. Homodimer. Probably interacts with PlsY.

Its subcellular location is the cytoplasm. It carries out the reaction a fatty acyl-[ACP] + phosphate = an acyl phosphate + holo-[ACP]. The protein operates within lipid metabolism; phospholipid metabolism. Catalyzes the reversible formation of acyl-phosphate (acyl-PO(4)) from acyl-[acyl-carrier-protein] (acyl-ACP). This enzyme utilizes acyl-ACP as fatty acyl donor, but not acyl-CoA. This chain is Phosphate acyltransferase, found in Shewanella woodyi (strain ATCC 51908 / MS32).